The following is a 341-amino-acid chain: NADH-quinone oxidoreductase subunit H (341 aa).

A run of 8 helical transmembrane segments spans residues 38–58 (PSVVGPFGLLQPFADAIKLLV), 70–90 (ILFIMAPMLTFILALIVWAVI), 115–135 (IGVLYVLAISSLGIYGIIVAG), 161–181 (MGLIVATVVITTGTLNLGEMV), 187–207 (MPFWIDLLMMPIGVVFFISLL), 239–259 (LFFLGEYANMILGSAMMTIFF), 275–295 (IPGLIWFVLKIVLLLFIFVWT), and 314–334 (VFLPISVLWVILISGVLLFTG).

It belongs to the complex I subunit 1 family. In terms of assembly, NDH-1 is composed of 14 different subunits. Subunits NuoA, H, J, K, L, M, N constitute the membrane sector of the complex.

The protein localises to the cell membrane. The catalysed reaction is a quinone + NADH + 5 H(+)(in) = a quinol + NAD(+) + 4 H(+)(out). NDH-1 shuttles electrons from NADH, via FMN and iron-sulfur (Fe-S) centers, to quinones in the respiratory chain. The immediate electron acceptor for the enzyme in this species is believed to be ubiquinone. Couples the redox reaction to proton translocation (for every two electrons transferred, four hydrogen ions are translocated across the cytoplasmic membrane), and thus conserves the redox energy in a proton gradient. This subunit may bind ubiquinone. This Wolbachia sp. subsp. Brugia malayi (strain TRS) protein is NADH-quinone oxidoreductase subunit H.